The sequence spans 189 residues: Small ribosomal subunit protein uS4 (189 aa).

The S4 RNA-binding domain maps to 107–181; it reads RRLQTQVFKL…VKRRTLRKGD (75 aa). A disordered region spans residues 161–189; sequence QSPYGGGRPGRVKRRTLRKGDGAGGDDEE.

This sequence belongs to the universal ribosomal protein uS4 family. In terms of assembly, component of the small ribosomal subunit. Part of the small subunit (SSU) processome, composed of more than 70 proteins and the RNA chaperone small nucleolar RNA (snoRNA) U3.

The protein localises to the cytoplasm. Its subcellular location is the nucleus. It is found in the nucleolus. Functionally, component of the small ribosomal subunit. The ribosome is a large ribonucleoprotein complex responsible for the synthesis of proteins in the cell. Part of the small subunit (SSU) processome, first precursor of the small eukaryotic ribosomal subunit. During the assembly of the SSU processome in the nucleolus, many ribosome biogenesis factors, an RNA chaperone and ribosomal proteins associate with the nascent pre-rRNA and work in concert to generate RNA folding, modifications, rearrangements and cleavage as well as targeted degradation of pre-ribosomal RNA by the RNA exosome. In Caenorhabditis elegans, this protein is Small ribosomal subunit protein uS4 (rps-9).